Here is a 569-residue protein sequence, read N- to C-terminus: Phosphatase and actin regulator 2 (569 aa).

Positions 1-13 are enriched in polar residues; the sequence is MGQTSVSALSPQP. The disordered stretch occupies residues 1–47; it reads MGQTSVSALSPQPGSVDGLDKASIANSDGPPAGSQTPPFKRKGKLST. The residue at position 27 (serine 27) is a Phosphoserine. Position 36 is a phosphothreonine (threonine 36). One copy of the RPEL 1 repeat lies at 71–96; that stretch reads AVLERKISTRQSREELIRRGLLKELP. Disordered regions lie at residues 98–253 and 295–483; these read QDGD…TGKP and PTLP…QEAK. Positions 140–151 are enriched in basic and acidic residues; it reads GPPREEQAEEKT. The segment covering 162-176 has biased composition (low complexity); that stretch reads GSKASSSPSASSTSS. Residues 212–224 are compositionally biased toward polar residues; sequence LSPNTVTSETSSL. Serine 357 carries the post-translational modification Phosphoserine. A compositionally biased stretch (acidic residues) spans 386–399; the sequence is TDDDDEEDDDDDST. RPEL repeat units follow at residues 412–437, 450–475, and 488–513; these read DTLA…QRTS, TKLV…KQKN, and RRLS…RFNE. Residues 423–444 are compositionally biased toward basic and acidic residues; it reads SKKELEDKNILQRTSEEERQEL. The residue at position 457 (serine 457) is a Phosphoserine. Positions 461-483 are enriched in basic and acidic residues; the sequence is TTEELEQRSILKQKNEEEEQEAK. Serine 495 is modified (phosphoserine).

This sequence belongs to the phosphatase and actin regulator family. In terms of assembly, binds PPP1CA and actin. In terms of tissue distribution, expressed in the brain with high levels in the cerebellum, specifically in the Purkinje cell layer, choroid plexus and thalamus (ventral, rhomboid and anterior nuclei). Moderate to high expression in the hippocampus, piriform cortex, olfactory bulb, entorhinal cortex, as well as in geniculate bodies, lamboid septal zone, preoptic area and ventral pallidum (at protein level).

This chain is Phosphatase and actin regulator 2 (Phactr2), found in Rattus norvegicus (Rat).